The sequence spans 615 residues: Elongation factor 4 (615 aa).

One can recognise a tr-type G domain in the interval 17 to 198 (ASIRNFCIIA…RVSRTIPAPV (182 aa)). GTP is bound by residues 29-34 (DHGKST) and 145-148 (NKID).

The protein belongs to the TRAFAC class translation factor GTPase superfamily. Classic translation factor GTPase family. LepA subfamily.

Its subcellular location is the cell membrane. It catalyses the reaction GTP + H2O = GDP + phosphate + H(+). Required for accurate and efficient protein synthesis under certain stress conditions. May act as a fidelity factor of the translation reaction, by catalyzing a one-codon backward translocation of tRNAs on improperly translocated ribosomes. Back-translocation proceeds from a post-translocation (POST) complex to a pre-translocation (PRE) complex, thus giving elongation factor G a second chance to translocate the tRNAs correctly. Binds to ribosomes in a GTP-dependent manner. The polypeptide is Elongation factor 4 (Clavibacter michiganensis subsp. michiganensis (strain NCPPB 382)).